A 388-amino-acid polypeptide reads, in one-letter code: Methylthioribose-1-phosphate isomerase (388 aa).

D253 acts as the Proton donor in catalysis.

This sequence belongs to the eIF-2B alpha/beta/delta subunits family. MtnA subfamily.

Its subcellular location is the cytoplasm. It is found in the nucleus. The enzyme catalyses 5-(methylsulfanyl)-alpha-D-ribose 1-phosphate = 5-(methylsulfanyl)-D-ribulose 1-phosphate. Its pathway is amino-acid biosynthesis; L-methionine biosynthesis via salvage pathway; L-methionine from S-methyl-5-thio-alpha-D-ribose 1-phosphate: step 1/6. Functionally, catalyzes the interconversion of methylthioribose-1-phosphate (MTR-1-P) into methylthioribulose-1-phosphate (MTRu-1-P). The protein is Methylthioribose-1-phosphate isomerase of Fusarium vanettenii (strain ATCC MYA-4622 / CBS 123669 / FGSC 9596 / NRRL 45880 / 77-13-4) (Fusarium solani subsp. pisi).